The chain runs to 246 residues: Ribosomal RNA small subunit methyltransferase J (246 aa).

Residues 115-116 (ER) and Asp-169 contribute to the S-adenosyl-L-methionine site.

Belongs to the methyltransferase superfamily. RsmJ family.

The protein localises to the cytoplasm. The catalysed reaction is guanosine(1516) in 16S rRNA + S-adenosyl-L-methionine = N(2)-methylguanosine(1516) in 16S rRNA + S-adenosyl-L-homocysteine + H(+). Its function is as follows. Specifically methylates the guanosine in position 1516 of 16S rRNA. This is Ribosomal RNA small subunit methyltransferase J from Buchnera aphidicola subsp. Acyrthosiphon pisum (strain 5A).